Consider the following 259-residue polypeptide: Small ribosomal subunit protein eS4 (259 aa).

The S4 RNA-binding domain occupies 41 to 100 (LPLSLFLRNRLKYALNYTEAKKILTQRVVRVDGKVRTCHKFPTGFMDVVAIERTNEYFRM).

Belongs to the eukaryotic ribosomal protein eS4 family.

The polypeptide is Small ribosomal subunit protein eS4 (rps-4) (Caenorhabditis elegans).